The chain runs to 83 residues: Cytochrome c6 (83 aa).

C14, C17, and H18 together coordinate heme c. N6-methyllysine; partial is present on K24. Position 59 (M59) interacts with heme c.

This sequence belongs to the cytochrome c family. PetJ subfamily. As to quaternary structure, monomer. Post-translationally, binds 1 heme c group covalently per subunit. In terms of processing, 50% of the molecules were found to be monomethylated at Lys-24.

Its subcellular location is the plastid. The protein resides in the chloroplast thylakoid lumen. In terms of biological role, functions as an electron carrier between membrane-bound cytochrome b6-f and photosystem I in oxygenic photosynthesis. This is Cytochrome c6 (petJ) from Diacronema lutheri (Unicellular marine alga).